Here is a 358-residue protein sequence, read N- to C-terminus: Peptide chain release factor 1 (358 aa).

Gln-237 bears the N5-methylglutamine mark. Over residues 291-309 (EESGYRKLAGHGDRSEKIR) the composition is skewed to basic and acidic residues. Residues 291–313 (EESGYRKLAGHGDRSEKIRTYNY) are disordered.

Belongs to the prokaryotic/mitochondrial release factor family. Post-translationally, methylated by PrmC. Methylation increases the termination efficiency of RF1.

It is found in the cytoplasm. Its function is as follows. Peptide chain release factor 1 directs the termination of translation in response to the peptide chain termination codons UAG and UAA. This is Peptide chain release factor 1 from Mycoplasmopsis agalactiae (strain NCTC 10123 / CIP 59.7 / PG2) (Mycoplasma agalactiae).